Here is a 585-residue protein sequence, read N- to C-terminus: Testis-specific serine kinase substrate (585 aa).

Residues 91–108 (EPDSSGTDSTTEDSGPLA) show a composition bias toward low complexity. The interval 91–125 (EPDSSGTDSTTEDSGPLALPGPPASPTTPWAPEDP) is disordered. Position 224 is a phosphoserine (Ser-224). 2 disordered regions span residues 264–312 (HGLS…SEQE) and 559–585 (LEGSTGAMGGGSNGGAPPKRGSPGSEQ). Position 281 is a phosphoserine; by TSSK1 and TSSK2 (Ser-281). Ser-309 bears the Phosphoserine mark.

Phosphorylated on serine residue(s) by STK22A/TSSK1 and STK22B/TSSK2. As to expression, testis specific.

Its subcellular location is the cytoplasm. It is found in the cytoskeleton. It localises to the microtubule organizing center. The protein localises to the centrosome. The protein resides in the centriole. Its subcellular location is the cytoplasmic vesicle. It is found in the secretory vesicle. It localises to the acrosome. Its function is as follows. May play a role in testicular physiology, most probably in the process of spermatogenesis or spermatid development. This chain is Testis-specific serine kinase substrate (Tsks), found in Mus musculus (Mouse).